A 184-amino-acid chain; its full sequence is UPF0398 protein BCG9842_B3730 (184 aa).

The protein belongs to the UPF0398 family.

In Bacillus cereus (strain G9842), this protein is UPF0398 protein BCG9842_B3730.